Consider the following 224-residue polypeptide: MQILLVEDDNTLFQELKKELEQWDFNVAGIEDFGKVMDTFESFNPEIVILDVQLPKYDGFYWCRKMREVSNVPILFLSSRDNPMDQVMSMELGADDYMQKPFYTNVLIAKLQAIYRRVYEFTAEEKRTLTWQDAVVDLSKDSIQKGDQTIFLSKTEMIILEILITKKNQIVSRDTIITALWDDEAFVSDNTLTVNVNRLRKKLSEISMDSAIETKVGKGYMAHE.

Positions 2-115 (QILLVEDDNT…VLIAKLQAIY (114 aa)) constitute a Response regulatory domain. Residue aspartate 51 is modified to 4-aspartylphosphate. A DNA-binding region (ompR/PhoB-type) is located at residues 126–224 (KRTLTWQDAV…KVGKGYMAHE (99 aa)). Phosphothreonine occurs at positions 128, 130, and 149.

In terms of assembly, interacts with GraX. Post-translationally, phosphorylated by GraS. Phosphorylated by Stk1; phosphorylation increases the DNA-binding activity of GraR.

The protein resides in the cytoplasm. Functionally, member of the two-component regulatory system GraR/GraS involved in resistance against cationic antimicrobial peptides (CAMPs). Upon phosphorylation by GraS, functions as a transcription regulator by direct binding to promoter regions of target genes such as adhesins, exoproteins, transporters, toxins, and proteins involved in cell wall synthesis. Down-regulates the expression of many genes involved in RNA and amino acid synthesis or glycolysis. In Staphylococcus aureus (strain USA300), this protein is Response regulator protein GraR (graR).